A 333-amino-acid chain; its full sequence is L-lactate dehydrogenase A chain (333 aa).

Residues 30–58 (GMVG…MEDK) and Arg100 contribute to the NAD(+) site. Positions 107, 139, and 170 each coordinate substrate. NAD(+) is bound at residue Asn139. The Proton acceptor role is filled by His194. Thr249 lines the substrate pocket.

The protein belongs to the LDH/MDH superfamily. LDH family. Homotetramer.

The protein localises to the cytoplasm. It carries out the reaction (S)-lactate + NAD(+) = pyruvate + NADH + H(+). It participates in fermentation; pyruvate fermentation to lactate; (S)-lactate from pyruvate: step 1/1. The sequence is that of L-lactate dehydrogenase A chain (ldha) from Cyprinus carpio (Common carp).